A 1129-amino-acid polypeptide reads, in one-letter code: Nuclear pore complex protein 15 (1129 aa).

It belongs to the nucleoporin Nup133 family.

It is found in the nucleus envelope. The protein localises to the nucleus. Its subcellular location is the nuclear pore complex. Its function is as follows. Important for early nematode development. The chain is Nuclear pore complex protein 15 from Caenorhabditis elegans.